We begin with the raw amino-acid sequence, 252 residues long: Probable transcriptional regulatory protein Tmel_0985 (252 aa).

It belongs to the TACO1 family.

Its subcellular location is the cytoplasm. This chain is Probable transcriptional regulatory protein Tmel_0985, found in Thermosipho melanesiensis (strain DSM 12029 / CIP 104789 / BI429).